Consider the following 208-residue polypeptide: Glutathione S-transferase 1 (208 aa).

The GST N-terminal domain occupies 1–80 (MDFYYLPGSA…YLVEKYGKTD (80 aa)). Residues serine 9, 50–52 (HTI), and 64–66 (ESR) each bind glutathione. The region spanning 86–207 (CPKKRAVINQ…AGCLEFKKYF (122 aa)) is the GST C-terminal domain.

The protein belongs to the GST superfamily. Theta family. Homodimer.

It carries out the reaction RX + glutathione = an S-substituted glutathione + a halide anion + H(+). Its function is as follows. Conjugation of reduced glutathione to a wide number of exogenous and endogenous hydrophobic electrophiles. This is Glutathione S-transferase 1 (Gst1) from Musca domestica (House fly).